We begin with the raw amino-acid sequence, 589 residues long: Kelch-like protein 25 (589 aa).

Residues 46–114 enclose the BTB domain; that stretch reads TDVTLWAGDR…AYSSRIVINE (69 aa). The region spanning 149 to 250 is the BACK domain; that stretch reads CLGMMVLSDA…LPSDCLKKAV (102 aa). Kelch repeat units follow at residues 296–340, 341–388, 389–444, 446–492, 493–538, and 539–585; these read TLLI…AIGC, KVYV…ELEN, CLYV…SAKL, LFVF…VLGS, QIFI…ASGN, and KLYV…STWK.

As to quaternary structure, component of the BCR(KLHL25) E3 ubiquitin ligase complex, at least composed of CUL3, KLHL25 and RBX1.

Its pathway is protein modification; protein ubiquitination. Its function is as follows. Substrate-specific adapter of a BCR (BTB-CUL3-RBX1) E3 ubiquitin ligase complex involved in various processes, such as translation homeostasis and lipid synthesis. The BCR(KLHL25) ubiquitin ligase complex acts by mediating ubiquitination of hypophosphorylated EIF4EBP1 (4E-BP1): ubiquitination and subsequent degradation of hypophosphorylated EIF4EBP1 (4E-BP1) probably serves as a homeostatic mechanism to maintain translation and prevent eIF4E inhibition when eIF4E levels are low. The BCR(KLHL25) complex does not target EIF4EBP1 (4E-BP1) when it is hyperphosphorylated or associated with eIF4E. The BCR(KLHL25) complex also acts as a regulator of lipid synthesis by mediating ubiquitination and degradation of ACLY, thereby inhibiting lipid synthesis. BCR(KLHL25)-mediated degradation of ACLY promotes fatty acid oxidation and is required for differentiation of inducible regulatory T (iTreg) cells. This Rattus norvegicus (Rat) protein is Kelch-like protein 25.